A 742-amino-acid polypeptide reads, in one-letter code: Phosphoribosylformylglycinamidine synthase subunit PurL (742 aa).

The active site involves H53. Positions 56 and 95 each coordinate ATP. E97 serves as a coordination point for Mg(2+). Substrate contacts are provided by residues 98-101 and R120; that span reads SHNH. H99 acts as the Proton acceptor in catalysis. D121 serves as a coordination point for Mg(2+). Residue Q245 coordinates substrate. Residue D275 coordinates Mg(2+). 319–321 is a binding site for substrate; sequence ESQ. 2 residues coordinate ATP: D502 and G539. N540 provides a ligand contact to Mg(2+). Position 542 (S542) interacts with substrate.

The protein belongs to the FGAMS family. Monomer. Part of the FGAM synthase complex composed of 1 PurL, 1 PurQ and 2 PurS subunits.

It is found in the cytoplasm. It catalyses the reaction N(2)-formyl-N(1)-(5-phospho-beta-D-ribosyl)glycinamide + L-glutamine + ATP + H2O = 2-formamido-N(1)-(5-O-phospho-beta-D-ribosyl)acetamidine + L-glutamate + ADP + phosphate + H(+). It participates in purine metabolism; IMP biosynthesis via de novo pathway; 5-amino-1-(5-phospho-D-ribosyl)imidazole from N(2)-formyl-N(1)-(5-phospho-D-ribosyl)glycinamide: step 1/2. In terms of biological role, part of the phosphoribosylformylglycinamidine synthase complex involved in the purines biosynthetic pathway. Catalyzes the ATP-dependent conversion of formylglycinamide ribonucleotide (FGAR) and glutamine to yield formylglycinamidine ribonucleotide (FGAM) and glutamate. The FGAM synthase complex is composed of three subunits. PurQ produces an ammonia molecule by converting glutamine to glutamate. PurL transfers the ammonia molecule to FGAR to form FGAM in an ATP-dependent manner. PurS interacts with PurQ and PurL and is thought to assist in the transfer of the ammonia molecule from PurQ to PurL. In Lactobacillus acidophilus (strain ATCC 700396 / NCK56 / N2 / NCFM), this protein is Phosphoribosylformylglycinamidine synthase subunit PurL.